Consider the following 225-residue polypeptide: Phosphatidylserine decarboxylase proenzyme (225 aa).

Ser195 acts as the Schiff-base intermediate with substrate; via pyruvic acid in catalysis. Position 195 is a pyruvic acid (Ser); by autocatalysis (Ser195).

The protein belongs to the phosphatidylserine decarboxylase family. PSD-A subfamily. Heterodimer of a large membrane-associated beta subunit and a small pyruvoyl-containing alpha subunit. The cofactor is pyruvate. Post-translationally, is synthesized initially as an inactive proenzyme. Formation of the active enzyme involves a self-maturation process in which the active site pyruvoyl group is generated from an internal serine residue via an autocatalytic post-translational modification. Two non-identical subunits are generated from the proenzyme in this reaction, and the pyruvate is formed at the N-terminus of the alpha chain, which is derived from the carboxyl end of the proenzyme. The post-translation cleavage follows an unusual pathway, termed non-hydrolytic serinolysis, in which the side chain hydroxyl group of the serine supplies its oxygen atom to form the C-terminus of the beta chain, while the remainder of the serine residue undergoes an oxidative deamination to produce ammonia and the pyruvoyl prosthetic group on the alpha chain.

Its subcellular location is the cell membrane. The enzyme catalyses a 1,2-diacyl-sn-glycero-3-phospho-L-serine + H(+) = a 1,2-diacyl-sn-glycero-3-phosphoethanolamine + CO2. Its pathway is phospholipid metabolism; phosphatidylethanolamine biosynthesis; phosphatidylethanolamine from CDP-diacylglycerol: step 2/2. Functionally, catalyzes the formation of phosphatidylethanolamine (PtdEtn) from phosphatidylserine (PtdSer). The protein is Phosphatidylserine decarboxylase proenzyme of Gluconacetobacter diazotrophicus (strain ATCC 49037 / DSM 5601 / CCUG 37298 / CIP 103539 / LMG 7603 / PAl5).